The following is a 180-amino-acid chain: Probable chorismate pyruvate-lyase (180 aa).

Positions 73, 111, and 170 each coordinate substrate.

Belongs to the UbiC family.

It is found in the cytoplasm. The catalysed reaction is chorismate = 4-hydroxybenzoate + pyruvate. It participates in cofactor biosynthesis; ubiquinone biosynthesis. Functionally, removes the pyruvyl group from chorismate, with concomitant aromatization of the ring, to provide 4-hydroxybenzoate (4HB) for the ubiquinone pathway. This Nitrosospira multiformis (strain ATCC 25196 / NCIMB 11849 / C 71) protein is Probable chorismate pyruvate-lyase.